The primary structure comprises 525 residues: Coronin-2A (525 aa).

WD repeat units lie at residues 80 to 120 (GHRG…LTKN), 130 to 170 (GHAR…SVIM), 178 to 217 (CHQD…VLQE), 220 to 263 (YKGH…VPVT), and 269 to 308 (GSSG…PHLN). Residues 485 to 524 (QMFYRQQDEIRRLRELVTQREVQAKQLELEIRNLRMNSPR) adopt a coiled-coil conformation.

Belongs to the WD repeat coronin family. As to quaternary structure, binds actin. Component of the N-Cor repressor complex, at least composed of NCOR1, NCOR2, HDAC3, TBL1X, TBL1R, CORO2A and GPS2.

The sequence is that of Coronin-2A (CORO2A) from Bos taurus (Bovine).